We begin with the raw amino-acid sequence, 237 residues long: UPF0173 metal-dependent hydrolase BOV_A0561 (237 aa).

This sequence belongs to the UPF0173 family.

In Brucella ovis (strain ATCC 25840 / 63/290 / NCTC 10512), this protein is UPF0173 metal-dependent hydrolase BOV_A0561.